Here is a 169-residue protein sequence, read N- to C-terminus: Neudesin (169 aa).

Residues 1-28 form the signal peptide; it reads MAGPAPGRRLVALALIVALAVGLPTAGA. One can recognise a Cytochrome b5 heme-binding domain in the interval 41-126; the sequence is VRLFTEEELA…EELESLDDVF (86 aa). Residue Lys-133 is modified to N6-acetyllysine. Residues 148–169 are disordered; the sequence is DGSPNLDFKPEDQPHFDIKDEF. Positions 155–169 are enriched in basic and acidic residues; that stretch reads FKPEDQPHFDIKDEF.

This sequence belongs to the cytochrome b5 family. MAPR subfamily. Interacts with PINK1 and PARK7.

The protein resides in the secreted. Its subcellular location is the extracellular space. The protein localises to the mitochondrion. It localises to the endoplasmic reticulum. Its function is as follows. Acts as a neurotrophic factor in postnatal mature neurons enhancing neuronal survival. Promotes cell proliferation and neurogenesis in undifferentiated neural progenitor cells at the embryonic stage and inhibits differentiation of astrocytes. Its neurotrophic activity is exerted via MAPK1/ERK2, MAPK3/ERK1 and AKT1/AKT pathways. Neurotrophic activity is enhanced by binding to heme. Also acts as an anorexigenic neurotrophic factor that contributes to energy balance. The chain is Neudesin (NENF) from Bos taurus (Bovine).